The primary structure comprises 1125 residues: Transient receptor potential cation channel subfamily A member 1 (1125 aa).

Residues 1–721 are Cytoplasmic-facing; sequence MKRGLRRILL…KWCAYGFRAH (721 aa). ANK repeat units lie at residues 63–94, 98–127, 131–161, 165–194, 198–227, 239–268, 272–301, 309–338, and 342–371; these read ENLC…VLNI, YGNT…NPNL, NMMS…NINL, NGNT…KLCK, WGDY…KNGY, KKAS…HIDM, AKCM…GSSD, NQET…DINS, and EGRS…KVDI. 5 disulfide bridges follow: cysteine 193–cysteine 666, cysteine 463–cysteine 666, cysteine 609–cysteine 622, cysteine 622–cysteine 666, and cysteine 634–cysteine 859. Position 395 is a 4-hydroxyproline; transient (proline 395). ANK repeat units follow at residues 413-442, 446-475, 482-511, 514-543, and 548-577; these read DGCT…SIHS, DKKS…DTRL, HGMT…LFLS, NGWT…KCTD, and EGNT…DILL. (E)-cinnamaldehyde contacts are provided by cysteine 415 and cysteine 422. Residue cysteine 622 coordinates (E)-cinnamaldehyde. Cysteine 634 carries the cysteine sulfenic acid (-SOH); transient; in hyperoxia modification. The (E)-cinnamaldehyde site is built by cysteine 642, cysteine 666, and lysine 712. The helical transmembrane segment at 722 to 742 threads the bilayer; it reads MMNLGSYCLGLIPMTLLVVKI. The Extracellular segment spans residues 743 to 767; the sequence is QPGMAFNSTGIINGTSSTHEERIDT. Asparagine 749 and asparagine 755 each carry an N-linked (GlcNAc...) asparagine glycan. Residues 768-788 form a helical membrane-spanning segment; it reads LNSFPIKICMILVFLSSIFGY. Topologically, residues 789-806 are cytoplasmic; it reads CKEVIQIFQQKRNYFLDY. Ca(2+)-binding residues include glutamate 791, glutamine 794, asparagine 808, and glutamate 811. Residues 807–827 traverse the membrane as a helical segment; the sequence is NNALEWVIYTTSIIFVLPLFL. The Extracellular segment spans residues 828–832; it reads NIPAY. The chain crosses the membrane as a helical span at residues 833 to 853; that stretch reads MQWQCGAIAIFFYWMNFLLYL. Topologically, residues 854–876 are cytoplasmic; that stretch reads QRFENCGIFIVMLEVIFKTLLRS. The residue at position 859 (cysteine 859) is a Cysteine sulfenic acid (-SOH); transient; in hyperoxia. A helical transmembrane segment spans residues 877–897; sequence TGVFIFLLLAFGLSFYVLLNF. Residues 898 to 904 are Extracellular-facing; that stretch reads QDAFSTP. Residues 905 to 925 constitute an intramembrane region (pore-forming); it reads LLSLIQTFSMMLGDINYRDAF. The Extracellular portion of the chain corresponds to 926 to 937; it reads LEPLFRNELAYP. Residues 938 to 959 form a helical membrane-spanning segment; sequence VLTFGQLIAFTMFVPIVLMNLL. Over 960 to 1125 the chain is Cytoplasmic; it reads IGLAVGDIAE…THCSISHPDF (166 aa). The stretch at 1044 to 1073 forms a coiled coil; that stretch reads MEILKQKYRLKDLTSLLEKQHELIKLIIQK. 1048 to 1054 contacts a 1,2-diacyl-sn-glycero-3-phospho-(1D-myo-inositol); the sequence is KQKYRLK.

This sequence belongs to the transient receptor (TC 1.A.4) family. As to quaternary structure, homotetramer. Interacts with TMEM100. Interacts with EGLN1. Interacts with the scorpion wasabi receptor toxin at the same site that electrophiles but in a non-covalent manner. Post-translationally, TRPA1 activation by electrophiles occurs though covalent modification of specific cysteine residues in the N-terminal cytoplasmic domain. Hydroxylation is required for TRPA1 activity inhibition in normoxia. In hypoxia, the decrease in oxygen concentration diminishes the activity of the hydroxylase EGLN1, thus relieving TRPA1 from inhibition and ultimately leading to channel activation. In terms of processing, oxidation of Cys-634 and Cys-859 in hyperoxia may override the hydroxylase EGLN1-mediated inhibition, causing TRPA1 activation. Expressed in inner ear (at protein level). Specifically expressed in a subset of nociceptive neurons. Expressed in the same neurons that TRPV1. In contrast, it is not expressed in neurons expressing TRPM8. Expressed in the superior cervical ganglion of vagus nerve. Expressed in the inferior ganglion (nodose ganglion) of vagus nerve. Expressed in dorsal root ganglia neurons.

The protein resides in the cell membrane. The enzyme catalyses Ca(2+)(in) = Ca(2+)(out). It catalyses the reaction Mg(2+)(in) = Mg(2+)(out). It carries out the reaction Na(+)(in) = Na(+)(out). The catalysed reaction is K(+)(in) = K(+)(out). The enzyme catalyses Zn(2+)(in) = Zn(2+)(out). With respect to regulation, electrophilic ligands activate the channel by covalent modification of intracellular cysteines. Cys-622 plays a key role in covalent binding of electrophiles. Extracellular Ca(2+) both potentiates and inactivates TRPA1; a rapid potentiation follows by slow desensitization. Activated by increase in intracellular Ca(2+) concentration. Inhibited by the potent blocker of TRPV channels ruthenium red, A-967079. Activated by icilin, sulfhydryl reactive agent MTSEA, N-methyl maleimide (NMM), and PF-4840154. Also activated by hyperoxia. Activated by intracellular Zn(2+). TRPA1 activation may critically depend on the presence of small intracellular compounds such as polyphosphates. Its function is as follows. Ligand-activated Ca(2+)-permeable, nonselective cation channel. Involved in pain detection and possibly also in cold perception, oxygen concentration perception, cough, itch, and inner ear function. Has a relatively high Ca(2+) selectivity, with a preference for divalent over monovalent cations (Ca(2+) &gt; Ba(2+) &gt; Mg(2+) &gt; NH4(+) &gt; Li(+) &gt; K(+)), the influx of cation into the cytoplasm, leads to membrane depolarization. Has a central role in the pain response to endogenous inflammatory mediators, such as bradykinin and to a diverse array of irritants. Activated by a large variety of structurally unrelated electrophilic and non-electrophilic chemical compounds, such as allylthiocyanate (AITC) from mustard oil or wasabi, cinnamaldehyde, diallyl disulfide (DADS) from garlic, and acrolein, an environmental irritant. Electrophilic ligands activate TRPA1 by interacting with critical N-terminal Cys residues in a covalent manner. Non-electrophile agonists bind at distinct sites in the transmembrane domain to promote channel activation. Also acts as an ionotropic cannabinoid receptor by being activated by delta(9)-tetrahydrocannabinol (THC), the psychoactive component of marijuana. May be a component for the mechanosensitive transduction channel of hair cells in inner ear, thereby participating in the perception of sounds. The polypeptide is Transient receptor potential cation channel subfamily A member 1 (Mus musculus (Mouse)).